The following is a 167-amino-acid chain: ATP synthase subunit b (167 aa).

A helical membrane pass occupies residues 9–29 (ALPLGNMLFIIIAFLLLMLIL).

Belongs to the ATPase B chain family. F-type ATPases have 2 components, F(1) - the catalytic core - and F(0) - the membrane proton channel. F(1) has five subunits: alpha(3), beta(3), gamma(1), delta(1), epsilon(1). F(0) has three main subunits: a(1), b(2) and c(10-14). The alpha and beta chains form an alternating ring which encloses part of the gamma chain. F(1) is attached to F(0) by a central stalk formed by the gamma and epsilon chains, while a peripheral stalk is formed by the delta and b chains.

Its subcellular location is the cell membrane. Functionally, f(1)F(0) ATP synthase produces ATP from ADP in the presence of a proton or sodium gradient. F-type ATPases consist of two structural domains, F(1) containing the extramembraneous catalytic core and F(0) containing the membrane proton channel, linked together by a central stalk and a peripheral stalk. During catalysis, ATP synthesis in the catalytic domain of F(1) is coupled via a rotary mechanism of the central stalk subunits to proton translocation. Component of the F(0) channel, it forms part of the peripheral stalk, linking F(1) to F(0). The polypeptide is ATP synthase subunit b (Leuconostoc mesenteroides subsp. mesenteroides (strain ATCC 8293 / DSM 20343 / BCRC 11652 / CCM 1803 / JCM 6124 / NCDO 523 / NBRC 100496 / NCIMB 8023 / NCTC 12954 / NRRL B-1118 / 37Y)).